We begin with the raw amino-acid sequence, 610 residues long: UvrABC system protein C (610 aa).

In terms of domain architecture, GIY-YIG spans 16 to 94; it reads SQPGVYRMYD…IKLYQPRYNV (79 aa). Residues 204-239 form the UVR domain; that stretch reads QQVLHQLIERMENASKALNFEEAARIRDQIQAVRRV.

The protein belongs to the UvrC family. As to quaternary structure, interacts with UvrB in an incision complex.

The protein localises to the cytoplasm. Functionally, the UvrABC repair system catalyzes the recognition and processing of DNA lesions. UvrC both incises the 5' and 3' sides of the lesion. The N-terminal half is responsible for the 3' incision and the C-terminal half is responsible for the 5' incision. This Serratia proteamaculans (strain 568) protein is UvrABC system protein C.